A 164-amino-acid chain; its full sequence is Ribosome maturation factor RimM (164 aa).

In terms of domain architecture, PRC barrel spans 90–161; that stretch reads EGRYYVADII…EIIIKPVKTW (72 aa).

This sequence belongs to the RimM family. In terms of assembly, binds ribosomal protein uS19.

Its subcellular location is the cytoplasm. Functionally, an accessory protein needed during the final step in the assembly of 30S ribosomal subunit, possibly for assembly of the head region. Essential for efficient processing of 16S rRNA. May be needed both before and after RbfA during the maturation of 16S rRNA. It has affinity for free ribosomal 30S subunits but not for 70S ribosomes. In Clostridium tetani (strain Massachusetts / E88), this protein is Ribosome maturation factor RimM.